The following is a 420-amino-acid chain: Cyclin-B2-1 (420 aa).

The disordered stretch occupies residues 1–61; that stretch reads MDRASENRRL…EKSGKEEQKP (61 aa). The span at 49 to 60 shows a compositional bias: basic and acidic residues; that stretch reads PMLEKSGKEEQK.

This sequence belongs to the cyclin family. Cyclin AB subfamily. Interacts with CDKB2-1. Expressed in the root apices.

Involved in the control of the cell cycle at the G2/M (mitosis) transition. May activate CDKB2-1 kinase. This Oryza sativa subsp. japonica (Rice) protein is Cyclin-B2-1 (CYCB2-1).